Reading from the N-terminus, the 331-residue chain is Phosphate acyltransferase (331 aa).

This sequence belongs to the PlsX family. Homodimer. Probably interacts with PlsY.

The protein resides in the cytoplasm. It carries out the reaction a fatty acyl-[ACP] + phosphate = an acyl phosphate + holo-[ACP]. Its pathway is lipid metabolism; phospholipid metabolism. In terms of biological role, catalyzes the reversible formation of acyl-phosphate (acyl-PO(4)) from acyl-[acyl-carrier-protein] (acyl-ACP). This enzyme utilizes acyl-ACP as fatty acyl donor, but not acyl-CoA. The polypeptide is Phosphate acyltransferase (Chlorobaculum tepidum (strain ATCC 49652 / DSM 12025 / NBRC 103806 / TLS) (Chlorobium tepidum)).